A 277-amino-acid polypeptide reads, in one-letter code: MSSHPIRSQYEDFLRHVSTHGVFKADRTGTGTTSVFGYQMRFDLNEGFPLVTTKKVFLKAIVLELLWFLRGDSNVKWLQERGCTIWDEWARPDGDLGPVYGVQWRSWPTPDGGHIDQIAEAIKTLKTNPDSRRIIVSAWNVAELDKMALMPCHAFFQFYVAPAQTPGGKGKLSCQLYQRSADIFLGVPFNIASYALLTHMVAQQCDLDVGDFIWTGGDCHVYSNHAEQVALQLSRTPFAYPTLSIKRKPASIFDYAYEDFEVLGYECHPAIKAPVAV.

DUMP-binding positions include arginine 27 and 132–133; that span reads RR. The active-site Nucleophile is the cysteine 152. Residues 179–182, asparagine 190, and 220–222 each bind dUMP; these read RSAD and HVY. Aspartate 182 contacts (6R)-5,10-methylene-5,6,7,8-tetrahydrofolate. Alanine 276 contacts (6R)-5,10-methylene-5,6,7,8-tetrahydrofolate.

It belongs to the thymidylate synthase family. Bacterial-type ThyA subfamily. In terms of assembly, homodimer.

The protein resides in the cytoplasm. It carries out the reaction dUMP + (6R)-5,10-methylene-5,6,7,8-tetrahydrofolate = 7,8-dihydrofolate + dTMP. It functions in the pathway pyrimidine metabolism; dTTP biosynthesis. Its function is as follows. Catalyzes the reductive methylation of 2'-deoxyuridine-5'-monophosphate (dUMP) to 2'-deoxythymidine-5'-monophosphate (dTMP) while utilizing 5,10-methylenetetrahydrofolate (mTHF) as the methyl donor and reductant in the reaction, yielding dihydrofolate (DHF) as a by-product. This enzymatic reaction provides an intracellular de novo source of dTMP, an essential precursor for DNA biosynthesis. The polypeptide is Thymidylate synthase (Albidiferax ferrireducens (strain ATCC BAA-621 / DSM 15236 / T118) (Rhodoferax ferrireducens)).